A 239-amino-acid polypeptide reads, in one-letter code: Ribosomal RNA small subunit methyltransferase G (239 aa).

S-adenosyl-L-methionine contacts are provided by residues Gly78, Phe83, 129-130 (AE), and Arg148.

The protein belongs to the methyltransferase superfamily. RNA methyltransferase RsmG family.

It is found in the cytoplasm. Its function is as follows. Specifically methylates the N7 position of a guanine in 16S rRNA. This chain is Ribosomal RNA small subunit methyltransferase G, found in Clostridium tetani (strain Massachusetts / E88).